The chain runs to 449 residues: 23S rRNA (uracil(1939)-C(5))-methyltransferase RlmD (449 aa).

In terms of domain architecture, TRAM spans 1–66 (MGRSRHHNKL…AKFDEAKVVE (66 aa)). The [4Fe-4S] cluster site is built by cysteine 79, cysteine 85, cysteine 88, and cysteine 169. S-adenosyl-L-methionine contacts are provided by glutamine 280, phenylalanine 309, asparagine 314, glutamate 330, asparagine 357, and aspartate 379. Catalysis depends on cysteine 405, which acts as the Nucleophile.

This sequence belongs to the class I-like SAM-binding methyltransferase superfamily. RNA M5U methyltransferase family. RlmD subfamily.

It catalyses the reaction uridine(1939) in 23S rRNA + S-adenosyl-L-methionine = 5-methyluridine(1939) in 23S rRNA + S-adenosyl-L-homocysteine + H(+). Functionally, catalyzes the formation of 5-methyl-uridine at position 1939 (m5U1939) in 23S rRNA. The sequence is that of 23S rRNA (uracil(1939)-C(5))-methyltransferase RlmD from Francisella tularensis subsp. novicida (strain U112).